Reading from the N-terminus, the 905-residue chain is Protein translocase subunit SecA (905 aa).

Residues Gln86, Gly104–Thr108, and Asp499 contribute to the ATP site. Cys890, Cys892, Cys901, and His902 together coordinate Zn(2+).

Belongs to the SecA family. In terms of assembly, monomer and homodimer. Part of the essential Sec protein translocation apparatus which comprises SecA, SecYEG and auxiliary proteins SecDF-YajC and YidC. Zn(2+) is required as a cofactor.

Its subcellular location is the cell inner membrane. It localises to the cytoplasm. It carries out the reaction ATP + H2O + cellular proteinSide 1 = ADP + phosphate + cellular proteinSide 2.. Its function is as follows. Part of the Sec protein translocase complex. Interacts with the SecYEG preprotein conducting channel. Has a central role in coupling the hydrolysis of ATP to the transfer of proteins into and across the cell membrane, serving both as a receptor for the preprotein-SecB complex and as an ATP-driven molecular motor driving the stepwise translocation of polypeptide chains across the membrane. This Rickettsia typhi (strain ATCC VR-144 / Wilmington) protein is Protein translocase subunit SecA.